A 405-amino-acid polypeptide reads, in one-letter code: Probable tRNA sulfurtransferase (405 aa).

In terms of domain architecture, THUMP spans 75–183 (PRAAGAAADV…QNLAYVYLET (109 aa)). ATP-binding positions include 201–202 (LM), Lys-285, Gly-307, and Gln-316.

It belongs to the ThiI family.

The protein resides in the cytoplasm. It catalyses the reaction [ThiI sulfur-carrier protein]-S-sulfanyl-L-cysteine + a uridine in tRNA + 2 reduced [2Fe-2S]-[ferredoxin] + ATP + H(+) = [ThiI sulfur-carrier protein]-L-cysteine + a 4-thiouridine in tRNA + 2 oxidized [2Fe-2S]-[ferredoxin] + AMP + diphosphate. The catalysed reaction is [ThiS sulfur-carrier protein]-C-terminal Gly-Gly-AMP + S-sulfanyl-L-cysteinyl-[cysteine desulfurase] + AH2 = [ThiS sulfur-carrier protein]-C-terminal-Gly-aminoethanethioate + L-cysteinyl-[cysteine desulfurase] + A + AMP + 2 H(+). It functions in the pathway cofactor biosynthesis; thiamine diphosphate biosynthesis. Its function is as follows. Catalyzes the ATP-dependent transfer of a sulfur to tRNA to produce 4-thiouridine in position 8 of tRNAs, which functions as a near-UV photosensor. Also catalyzes the transfer of sulfur to the sulfur carrier protein ThiS, forming ThiS-thiocarboxylate. This is a step in the synthesis of thiazole, in the thiamine biosynthesis pathway. The sulfur is donated as persulfide by IscS. The polypeptide is Probable tRNA sulfurtransferase (Methanosarcina mazei (strain ATCC BAA-159 / DSM 3647 / Goe1 / Go1 / JCM 11833 / OCM 88) (Methanosarcina frisia)).